The primary structure comprises 264 residues: Zinc import ATP-binding protein ZnuC (264 aa).

One can recognise an ABC transporter domain in the interval 20–235; sequence VQLKNIEVTF…PNFIHFFGDQ (216 aa). Residue 52–59 participates in ATP binding; that stretch reads GPNGGGKS.

This sequence belongs to the ABC transporter superfamily. Zinc importer (TC 3.A.1.15.5) family. In terms of assembly, the complex is composed of two ATP-binding proteins (ZnuC), two transmembrane proteins (ZnuB) and a solute-binding protein (ZnuA).

It localises to the cell inner membrane. It catalyses the reaction Zn(2+)(out) + ATP(in) + H2O(in) = Zn(2+)(in) + ADP(in) + phosphate(in) + H(+)(in). In terms of biological role, part of the ABC transporter complex ZnuABC involved in zinc import. Responsible for energy coupling to the transport system. This Haemophilus ducreyi (strain 35000HP / ATCC 700724) protein is Zinc import ATP-binding protein ZnuC.